Here is a 428-residue protein sequence, read N- to C-terminus: Trigger factor (428 aa).

A PPIase FKBP-type domain is found at 166-250; sequence GDIVTFDFKG…IKNIKEKILP (85 aa).

This sequence belongs to the FKBP-type PPIase family. Tig subfamily.

The protein resides in the cytoplasm. The enzyme catalyses [protein]-peptidylproline (omega=180) = [protein]-peptidylproline (omega=0). Functionally, involved in protein export. Acts as a chaperone by maintaining the newly synthesized protein in an open conformation. Functions as a peptidyl-prolyl cis-trans isomerase. The chain is Trigger factor from Mycoplasma mycoides subsp. mycoides SC (strain CCUG 32753 / NCTC 10114 / PG1).